Consider the following 186-residue polypeptide: MPSFTQPHSAPRNFQFPGQQRQGDPTMGTINAELADKGFLVTSTDELITWARTGSLMWMTFGLACCAIEMMQMSMPRYDIERFGVAPRASPRQSDLMIVAGTLCNKMAPALRKVYDQMPEPRYVISMGSCANGGGYYHYSYSVVRGCDRVVPVDIYVPGCPPTAEALLYGILLLQRKIRRNGSIER.

Residues 1–27 (MPSFTQPHSAPRNFQFPGQQRQGDPTM) form a disordered region. The [4Fe-4S] cluster site is built by C65, C66, C130, and C160.

This sequence belongs to the complex I 20 kDa subunit family. As to quaternary structure, NDH-1 is composed of 14 different subunits. Subunits NuoB, C, D, E, F, and G constitute the peripheral sector of the complex. [4Fe-4S] cluster serves as cofactor.

Its subcellular location is the cell inner membrane. It carries out the reaction a quinone + NADH + 5 H(+)(in) = a quinol + NAD(+) + 4 H(+)(out). Its function is as follows. NDH-1 shuttles electrons from NADH, via FMN and iron-sulfur (Fe-S) centers, to quinones in the respiratory chain. The immediate electron acceptor for the enzyme in this species is believed to be ubiquinone. Couples the redox reaction to proton translocation (for every two electrons transferred, four hydrogen ions are translocated across the cytoplasmic membrane), and thus conserves the redox energy in a proton gradient. In Rhizobium etli (strain ATCC 51251 / DSM 11541 / JCM 21823 / NBRC 15573 / CFN 42), this protein is NADH-quinone oxidoreductase subunit B 2.